Here is a 267-residue protein sequence, read N- to C-terminus: NAD kinase 2 (267 aa).

The active-site Proton acceptor is Asp-52. NAD(+) is bound by residues 52–53 (DA), 124–125 (NE), Arg-151, Asp-153, 164–169 (TAYNKS), and Ala-188.

The protein belongs to the NAD kinase family. It depends on a divalent metal cation as a cofactor.

It localises to the cytoplasm. It carries out the reaction NAD(+) + ATP = ADP + NADP(+) + H(+). Functionally, involved in the regulation of the intracellular balance of NAD and NADP, and is a key enzyme in the biosynthesis of NADP. Catalyzes specifically the phosphorylation on 2'-hydroxyl of the adenosine moiety of NAD to yield NADP. This Bacillus cereus (strain ATCC 10987 / NRS 248) protein is NAD kinase 2.